The chain runs to 56 residues: Protein hunchback (56 aa).

3 consecutive C2H2-type zinc fingers follow at residues 1-5, 11-33, and 39-56; these read HVRNH, HKCG…MKSH, and YRCA…SLKL.

The protein belongs to the hunchback C2H2-type zinc-finger protein family.

The protein resides in the nucleus. In terms of biological role, gap class segmentation protein that controls development of head structures. The protein is Protein hunchback (hb) of Bithynia tentaculata (Spire snail).